The sequence spans 275 residues: uncharacterized protein (275 aa).

Its subcellular location is the virion. This is an uncharacterized protein from Acanthamoeba polyphaga (Amoeba).